Consider the following 267-residue polypeptide: Serine/arginine-rich splicing factor 7 (267 aa).

Residues 40–113 (TKVYVGNLGT…SRVRVELSTG (74 aa)) enclose the RRM domain. Lys-53 is subject to N6-acetyllysine; alternate. A Glycyl lysine isopeptide (Lys-Gly) (interchain with G-Cter in SUMO2); alternate cross-link involves residue Lys-53. The residue at position 61 (Ser-61) is a Phosphoserine. The sufficient for interaction with NXF1 stretch occupies residues 110 to 127 (LSTGMPRRSRFDRPPARR). A CCHC-type zinc finger spans residues 133–150 (DRCYECGEKGHYAYDCHR). Positions 152-209 (SRRRRSRSRSRSHSRSRGRRYSRSRSRSRGRRSRSASPRRSRSVSLRRSRSASLRRSR) are enriched in basic residues. The interval 152–267 (SRRRRSRSRS…HRSASPERMD (116 aa)) is disordered. 4 repeat units span residues 182–189 (RRSRSASP), 190–197 (RRSRSVSL), 198–205 (RRSRSASL), and 206–213 (RRSRSGSI). Residues 182–255 (RRSRSASPRR…SPKRSRSPSG (74 aa)) are 6 X 8 AA repeats of R-R-S-R-S-X-S-X. Ser-192, Ser-194, and Ser-196 each carry phosphoserine. Residues Ser-210, Ser-212, Ser-221, Ser-223, and Ser-225 each carry the phosphoserine modification. A compositionally biased stretch (basic residues) spans 223-251 (SRSRSRSRSISRPRSSRSKSRSPSPKRSR). A 5; approximate repeat occupies 240-247 (SKSRSPSP). Residues 248-255 (KRSRSPSG) form a 6; approximate repeat. A phosphoserine mark is found at Ser-260 and Ser-262.

The protein belongs to the splicing factor SR family. In terms of assembly, found in large molecular weight complexes containing CCNL1 and the p110 isoforms of either CDC2L1 or CDC2L2. Interacts with CCNL2 and CPSF6. Interacts with NXF1. Interacts with YTHDC1. In terms of processing, extensively phosphorylated on serine residues in the RS domain.

The protein localises to the nucleus. It is found in the cytoplasm. Functionally, required for pre-mRNA splicing. Represses the splicing of MAPT/Tau exon 10. May function as export adapter involved in mRNA nuclear export such as of histone H2A. Binds mRNA which is thought to be transferred to the NXF1-NXT1 heterodimer for export (TAP/NXF1 pathway); enhances NXF1-NXT1 RNA-binding activity. RNA-binding is semi-sequence specific. This is Serine/arginine-rich splicing factor 7 (Srsf7) from Mus musculus (Mouse).